A 411-amino-acid chain; its full sequence is Corticotropin-releasing factor receptor 2 (411 aa).

A signal peptide (not cleaved) is located at residues 1-19 (MDAALLLSLLEANCSLALA). Residues 1-108 (MDAALLLSLL…EPILDDKQRK (108 aa)) lie on the Extracellular side of the membrane. 5 N-linked (GlcNAc...) asparagine glycosylation sites follow: Asn13, Asn41, Asn74, Asn86, and Asn94. 3 disulfide bridges follow: Cys14/Cys50, Cys40/Cys83, and Cys64/Cys98. The chain crosses the membrane as a helical span at residues 109 to 139 (YDLHYRIALIINYLGHCVSVVALVAAFLLFL). Residues 140–146 (VLRSIRC) are Cytoplasmic-facing. The helical transmembrane segment at 147 to 171 (LRNVIHWNLITTFILRNITWFLLQL) threads the bilayer. At 172 to 185 (IDHEVHEGNEVWCR) the chain is on the extracellular side. A disulfide bridge links Cys184 with Cys254. The helical transmembrane segment at 186–214 (CVTTIFNYFVVTNFFWMFVEGCYLHTAIV) threads the bilayer. Over 215–221 (MTYSTEH) the chain is Cytoplasmic. The chain crosses the membrane as a helical span at residues 222-249 (LRKWLFLFIGWCIPCPIIVAWAVGKLYY). At 250–265 (ENEQCWFGKEPGDLVD) the chain is on the extracellular side. The chain crosses the membrane as a helical span at residues 266-291 (YIYQGPIILVLLINFVFLFNIVRILM). At 292-302 (TKLRASTTSET) the chain is on the cytoplasmic side. A helical membrane pass occupies residues 303–327 (IQYRKAVKATLVLLPLLGITYMLFF). Over 328 to 334 (VNPGEDD) the chain is Extracellular. The chain crosses the membrane as a helical span at residues 335 to 364 (LSQIVFIYFNSFLQSFQGFFVSVFYCFFNG). Topologically, residues 365–411 (EVRSALRKRWHRWQDHHALRVPVARAMSIPTSPTRISFHSIKQTAAV) are cytoplasmic.

It belongs to the G-protein coupled receptor 2 family. In terms of assembly, monomer. Interacts (via N-terminal extracellular domain) with CRF, UCN, UCN2 and UCN3. In terms of processing, a N-glycosylation site within the signal peptide impedes its proper cleavage and function. As to expression, predominantly expressed in limbic regions of the brain such as the lateral septum, the entorhinal cortex, the hypothalamic ventromedial nucleus and several amygdaloid nuclei. Also detectable in lung, kidney and heart.

Its subcellular location is the cell membrane. In terms of biological role, G-protein coupled receptor for CRH (corticotropin-releasing factor), UCN (urocortin), UCN2 and UCN3. Has high affinity for UCN. Ligand binding causes a conformation change that triggers signaling via guanine nucleotide-binding proteins (G proteins) and down-stream effectors, such as adenylate cyclase. Promotes the activation of adenylate cyclase, leading to increased intracellular cAMP levels. The chain is Corticotropin-releasing factor receptor 2 (Crhr2) from Rattus norvegicus (Rat).